The chain runs to 568 residues: Estrogen receptor beta (568 aa).

A modulating region spans residues 1–177 (MHQQSPVDDV…SLRGKADMHY (177 aa)). 2 consecutive NR C4-type zinc fingers follow at residues 178-198 (CAVC…CEGC) and 214-238 (CPAT…LRKC). Residues 178–243 (CAVCSDYASG…RLRKCYEVGM (66 aa)) constitute a DNA-binding region (nuclear receptor). The region spanning 300–536 (TPEELIARIM…DLLLEMLDAH (237 aa)) is the NR LBD domain.

The protein belongs to the nuclear hormone receptor family. NR3 subfamily. In terms of assembly, binds DNA as a homodimer. Can form a heterodimer with ER-alpha.

The protein localises to the nucleus. Binds estrogens with an affinity similar to that of ER-alpha, and activates expression of reporter genes containing estrogen response elements (ERE) in an estrogen-dependent manner. The protein is Estrogen receptor beta (esr2) of Oncorhynchus mykiss (Rainbow trout).